A 189-amino-acid chain; its full sequence is UPF0301 protein CCA_00630 (189 aa).

This sequence belongs to the UPF0301 (AlgH) family.

In Chlamydia caviae (strain ATCC VR-813 / DSM 19441 / 03DC25 / GPIC) (Chlamydophila caviae), this protein is UPF0301 protein CCA_00630.